A 275-amino-acid polypeptide reads, in one-letter code: Large ribosomal subunit protein uL2 (275 aa).

Disordered regions lie at residues 28 to 59 (KPFA…GGHK) and 224 to 275 (AMNP…RHKR). The segment covering 35–49 (DSQSTTAGRNNNGHI) has biased composition (polar residues). Over residues 50–59 (TTRHKGGGHK) the composition is skewed to basic residues.

This sequence belongs to the universal ribosomal protein uL2 family. Part of the 50S ribosomal subunit. Forms a bridge to the 30S subunit in the 70S ribosome.

In terms of biological role, one of the primary rRNA binding proteins. Required for association of the 30S and 50S subunits to form the 70S ribosome, for tRNA binding and peptide bond formation. It has been suggested to have peptidyltransferase activity; this is somewhat controversial. Makes several contacts with the 16S rRNA in the 70S ribosome. This chain is Large ribosomal subunit protein uL2, found in Paraburkholderia xenovorans (strain LB400).